Here is a 571-residue protein sequence, read N- to C-terminus: Proline--tRNA ligase (571 aa).

Belongs to the class-II aminoacyl-tRNA synthetase family. ProS type 1 subfamily. As to quaternary structure, homodimer.

The protein resides in the cytoplasm. The catalysed reaction is tRNA(Pro) + L-proline + ATP = L-prolyl-tRNA(Pro) + AMP + diphosphate. Functionally, catalyzes the attachment of proline to tRNA(Pro) in a two-step reaction: proline is first activated by ATP to form Pro-AMP and then transferred to the acceptor end of tRNA(Pro). As ProRS can inadvertently accommodate and process non-cognate amino acids such as alanine and cysteine, to avoid such errors it has two additional distinct editing activities against alanine. One activity is designated as 'pretransfer' editing and involves the tRNA(Pro)-independent hydrolysis of activated Ala-AMP. The other activity is designated 'posttransfer' editing and involves deacylation of mischarged Ala-tRNA(Pro). The misacylated Cys-tRNA(Pro) is not edited by ProRS. The protein is Proline--tRNA ligase of Pseudomonas putida (strain W619).